The sequence spans 459 residues: Fe(3+)-Zn(2+) purple acid phosphatase (459 aa).

The signal sequence occupies residues 1-22; sequence MGVVKGLLALALVLNVVVVSNG. Gly-23 is subject to Blocked amino end (Gly). An N-linked (GlcNAc...) asparagine; partial glycan is attached at Asn-108. Asn-136 is a glycosylation site (N-linked (GlcNAc...) asparagine). Asp-162 is a binding site for Fe cation. A glycan (N-linked (GlcNAc...) asparagine) is linked at Asn-170. The Fe cation site is built by Asp-191 and Tyr-194. Residue Asp-191 participates in Zn(2+) binding. A Zn(2+)-binding site is contributed by Asn-228. Residue Asn-238 is glycosylated (N-linked (GlcNAc...) asparagine). His-313 is a Zn(2+) binding site. The active-site Proton donor is the His-323. Zn(2+) is bound at residue His-350. His-352 contributes to the Fe cation binding site. A glycan (N-linked (GlcNAc...) asparagine) is linked at Asn-423.

The protein belongs to the metallophosphoesterase superfamily. Purple acid phosphatase family. Homodimer; disulfide-linked. Fe cation serves as cofactor. Requires Zn(2+) as cofactor.

It localises to the secreted. It catalyses the reaction a phosphate monoester + H2O = an alcohol + phosphate. Inhibited by compounds CC24201, CC27209, and MO07123. Inhibited by the tetraoxoanions molybdate and phosphate. Not inhibited by EDTA or tartrate. This chain is Fe(3+)-Zn(2+) purple acid phosphatase, found in Phaseolus vulgaris (Kidney bean).